The sequence spans 247 residues: Flagellin B1 (247 aa).

The propeptide occupies 1–20 (MNKLLRKVRKAFSLKADNKA).

This sequence belongs to the archaeal flagellin family. In terms of processing, glycosylated.

Its subcellular location is the archaeal flagellum. Its function is as follows. Flagellin is the subunit protein which polymerizes to form the filaments of archaeal flagella. This Thermoplasma volcanium (strain ATCC 51530 / DSM 4299 / JCM 9571 / NBRC 15438 / GSS1) protein is Flagellin B1.